A 287-amino-acid chain; its full sequence is Phosphatidylserine decarboxylase proenzyme (287 aa).

Residues D89, H146, and S252 each act as charge relay system; for autoendoproteolytic cleavage activity in the active site. The active-site Schiff-base intermediate with substrate; via pyruvic acid; for decarboxylase activity is the S252. S252 bears the Pyruvic acid (Ser); by autocatalysis mark.

Belongs to the phosphatidylserine decarboxylase family. PSD-B subfamily. Prokaryotic type I sub-subfamily. Heterodimer of a large membrane-associated beta subunit and a small pyruvoyl-containing alpha subunit. The cofactor is pyruvate. In terms of processing, is synthesized initially as an inactive proenzyme. Formation of the active enzyme involves a self-maturation process in which the active site pyruvoyl group is generated from an internal serine residue via an autocatalytic post-translational modification. Two non-identical subunits are generated from the proenzyme in this reaction, and the pyruvate is formed at the N-terminus of the alpha chain, which is derived from the carboxyl end of the proenzyme. The autoendoproteolytic cleavage occurs by a canonical serine protease mechanism, in which the side chain hydroxyl group of the serine supplies its oxygen atom to form the C-terminus of the beta chain, while the remainder of the serine residue undergoes an oxidative deamination to produce ammonia and the pyruvoyl prosthetic group on the alpha chain. During this reaction, the Ser that is part of the protease active site of the proenzyme becomes the pyruvoyl prosthetic group, which constitutes an essential element of the active site of the mature decarboxylase.

It is found in the cell membrane. It carries out the reaction a 1,2-diacyl-sn-glycero-3-phospho-L-serine + H(+) = a 1,2-diacyl-sn-glycero-3-phosphoethanolamine + CO2. The protein operates within phospholipid metabolism; phosphatidylethanolamine biosynthesis; phosphatidylethanolamine from CDP-diacylglycerol: step 2/2. In terms of biological role, catalyzes the formation of phosphatidylethanolamine (PtdEtn) from phosphatidylserine (PtdSer). The chain is Phosphatidylserine decarboxylase proenzyme from Shewanella woodyi (strain ATCC 51908 / MS32).